A 364-amino-acid polypeptide reads, in one-letter code: Chaperone protein DnaJ (364 aa).

Positions 4–69 constitute a J domain; it reads DYYEILGLSK…NKKAKYDRFG (66 aa). Residues 135 to 213 form a CR-type zinc finger; sequence GYKNNINITR…CKGKGSLTKQ (79 aa). 8 residues coordinate Zn(2+): cysteine 148, cysteine 151, cysteine 165, cysteine 168, cysteine 187, cysteine 190, cysteine 201, and cysteine 204. 4 CXXCXGXG motif repeats span residues 148–155, 165–172, 187–194, and 201–208; these read CDSCLGKK, CNMCNGSG, CSKCYGEG, and CKSCKGKG.

The protein belongs to the DnaJ family. As to quaternary structure, homodimer. It depends on Zn(2+) as a cofactor.

Its subcellular location is the cytoplasm. Participates actively in the response to hyperosmotic and heat shock by preventing the aggregation of stress-denatured proteins and by disaggregating proteins, also in an autonomous, DnaK-independent fashion. Unfolded proteins bind initially to DnaJ; upon interaction with the DnaJ-bound protein, DnaK hydrolyzes its bound ATP, resulting in the formation of a stable complex. GrpE releases ADP from DnaK; ATP binding to DnaK triggers the release of the substrate protein, thus completing the reaction cycle. Several rounds of ATP-dependent interactions between DnaJ, DnaK and GrpE are required for fully efficient folding. Also involved, together with DnaK and GrpE, in the DNA replication of plasmids through activation of initiation proteins. The chain is Chaperone protein DnaJ from Borreliella burgdorferi (strain ATCC 35210 / DSM 4680 / CIP 102532 / B31) (Borrelia burgdorferi).